The following is a 235-amino-acid chain: Homeobox-leucine zipper protein ATHB-12 (235 aa).

Positions 27–86 (KSNNQKRFSEEQIKSLELIFESETRLEPRKKVQVARELGLQPRQVAIWFQNKRARWKTKQ) form a DNA-binding region, homeobox. Residues 87–122 (LEKEYNTLRANYNNLASQFEIMKKEKQSLVSELQRL) are leucine-zipper. 2 stretches are compositionally biased toward basic and acidic residues: residues 128–138 (RPKEEKHHECC) and 152–162 (HNGKSEPEGRL). Residues 128 to 167 (RPKEEKHHECCGDQGLALSSSTESHNGKSEPEGRLDQGSV) are disordered.

It belongs to the HD-ZIP homeobox family. Class I subfamily. In terms of assembly, interacts with TFIIB1. Widely expressed.

The protein resides in the nucleus. Its function is as follows. Probable transcription activator that may act as growth regulators in response to water deficit. This Arabidopsis thaliana (Mouse-ear cress) protein is Homeobox-leucine zipper protein ATHB-12 (ATHB-12).